A 226-amino-acid chain; its full sequence is Type-5 uracil-DNA glycosylase (226 aa).

Residues C23, C26, C125, and C140 each coordinate [4Fe-4S] cluster.

This sequence belongs to the uracil-DNA glycosylase (UDG) superfamily. Type 5 (UDGb) family.

In terms of biological role, DNA glycosylase with broad substrate specificity. Can remove uracil from double-stranded DNA containing either a U/G or U/A base pair. Can also process hydroxymethyluracil (mispaired with guanine or adenine), hypoxanthine and fluorouracil. Exhibits a clear preference for double-stranded DNA substrates, but can also process uracil in single-stranded DNA, with lower efficiency. This Pyrobaculum aerophilum (strain ATCC 51768 / DSM 7523 / JCM 9630 / CIP 104966 / NBRC 100827 / IM2) protein is Type-5 uracil-DNA glycosylase.